Consider the following 279-residue polypeptide: Alcohol dehydrogenase-related 31 kDa protein (279 aa).

Residue Tyr11–Leu34 coordinates NAD(+). Position 139 (Ser139) interacts with substrate. Tyr152 serves as the catalytic Proton acceptor.

Belongs to the short-chain dehydrogenases/reductases (SDR) family.

This Drosophila guanche (Fruit fly) protein is Alcohol dehydrogenase-related 31 kDa protein (Adhr).